Here is a 187-residue protein sequence, read N- to C-terminus: Elongation factor P (187 aa).

Belongs to the elongation factor P family.

The protein resides in the cytoplasm. It functions in the pathway protein biosynthesis; polypeptide chain elongation. Its function is as follows. Involved in peptide bond synthesis. Stimulates efficient translation and peptide-bond synthesis on native or reconstituted 70S ribosomes in vitro. Probably functions indirectly by altering the affinity of the ribosome for aminoacyl-tRNA, thus increasing their reactivity as acceptors for peptidyl transferase. The sequence is that of Elongation factor P from Synechococcus sp. (strain WH7803).